Consider the following 339-residue polypeptide: UDP-N-acetylglucosamine--N-acetylmuramyl-(pentapeptide) pyrophosphoryl-undecaprenol N-acetylglucosamine transferase (339 aa).

UDP-N-acetyl-alpha-D-glucosamine is bound by residues 10-12, Asn124, Arg168, Ser188, Ile235, and Gln280; that span reads TGG.

This sequence belongs to the glycosyltransferase 28 family. MurG subfamily.

Its subcellular location is the cell inner membrane. The catalysed reaction is di-trans,octa-cis-undecaprenyl diphospho-N-acetyl-alpha-D-muramoyl-L-alanyl-D-glutamyl-meso-2,6-diaminopimeloyl-D-alanyl-D-alanine + UDP-N-acetyl-alpha-D-glucosamine = di-trans,octa-cis-undecaprenyl diphospho-[N-acetyl-alpha-D-glucosaminyl-(1-&gt;4)]-N-acetyl-alpha-D-muramoyl-L-alanyl-D-glutamyl-meso-2,6-diaminopimeloyl-D-alanyl-D-alanine + UDP + H(+). The protein operates within cell wall biogenesis; peptidoglycan biosynthesis. In terms of biological role, cell wall formation. Catalyzes the transfer of a GlcNAc subunit on undecaprenyl-pyrophosphoryl-MurNAc-pentapeptide (lipid intermediate I) to form undecaprenyl-pyrophosphoryl-MurNAc-(pentapeptide)GlcNAc (lipid intermediate II). The protein is UDP-N-acetylglucosamine--N-acetylmuramyl-(pentapeptide) pyrophosphoryl-undecaprenol N-acetylglucosamine transferase of Pseudothermotoga lettingae (strain ATCC BAA-301 / DSM 14385 / NBRC 107922 / TMO) (Thermotoga lettingae).